The primary structure comprises 206 residues: Small ribosomal subunit protein uS4 (206 aa).

One can recognise an S4 RNA-binding domain in the interval serine 96–alanine 158.

This sequence belongs to the universal ribosomal protein uS4 family. In terms of assembly, part of the 30S ribosomal subunit. Contacts protein S5. The interaction surface between S4 and S5 is involved in control of translational fidelity.

One of the primary rRNA binding proteins, it binds directly to 16S rRNA where it nucleates assembly of the body of the 30S subunit. Functionally, with S5 and S12 plays an important role in translational accuracy. The chain is Small ribosomal subunit protein uS4 from Wigglesworthia glossinidia brevipalpis.